A 570-amino-acid polypeptide reads, in one-letter code: Sulfite reductase [NADPH] hemoprotein beta-component (570 aa).

Residues C434, C440, C479, and C483 each coordinate [4Fe-4S] cluster. C483 provides a ligand contact to siroheme.

Belongs to the nitrite and sulfite reductase 4Fe-4S domain family. Alpha(8)-beta(8). The alpha component is a flavoprotein, the beta component is a hemoprotein. Siroheme serves as cofactor. [4Fe-4S] cluster is required as a cofactor.

The enzyme catalyses hydrogen sulfide + 3 NADP(+) + 3 H2O = sulfite + 3 NADPH + 4 H(+). It participates in sulfur metabolism; hydrogen sulfide biosynthesis; hydrogen sulfide from sulfite (NADPH route): step 1/1. In terms of biological role, component of the sulfite reductase complex that catalyzes the 6-electron reduction of sulfite to sulfide. This is one of several activities required for the biosynthesis of L-cysteine from sulfate. The sequence is that of Sulfite reductase [NADPH] hemoprotein beta-component from Shigella boydii serotype 4 (strain Sb227).